Reading from the N-terminus, the 209-residue chain is dTTP/UTP pyrophosphatase (209 aa).

Residue aspartate 88 is the Proton acceptor of the active site.

Belongs to the Maf family. YhdE subfamily. It depends on a divalent metal cation as a cofactor.

The protein resides in the cytoplasm. The catalysed reaction is dTTP + H2O = dTMP + diphosphate + H(+). The enzyme catalyses UTP + H2O = UMP + diphosphate + H(+). Functionally, nucleoside triphosphate pyrophosphatase that hydrolyzes dTTP and UTP. May have a dual role in cell division arrest and in preventing the incorporation of modified nucleotides into cellular nucleic acids. The protein is dTTP/UTP pyrophosphatase of Burkholderia mallei (strain ATCC 23344).